The sequence spans 594 residues: Parathyroid hormone/parathyroid hormone-related peptide receptor (594 aa).

The first 28 residues, 1 to 28 (MGTARIAPGLALLLCCPVLSSAYALVDA), serve as a signal peptide directing secretion. The Extracellular portion of the chain corresponds to 29-188 (DDVMTKEEQI…TREREVFDRL (160 aa)). Intrachain disulfides connect Cys48-Cys117, Cys108-Cys149, and Cys132-Cys171. Residues 66–102 (DKGWTSASTSGKPRKDKASGKLYPESEEDKEAPTDSR) form a disordered region. N-linked (GlcNAc...) asparagine glycans are attached at residues Asn152, Asn162, Asn167, and Asn177. The chain crosses the membrane as a helical span at residues 189 to 209 (GMIYTVGYSMSLASLTVAVLI). Residues 210-223 (LAYFRRLHCTRNYI) are Cytoplasmic-facing. Residues 224–244 (HMHLFLSFMLRAVSIFVKDAV) traverse the membrane as a helical segment. At 245-295 (LYSGATLDEAERLTEEELRAIAQAPPPPATAAAGYAGCRVAVTFFLYFLAT) the chain is on the extracellular side. A helical membrane pass occupies residues 296–316 (NYYWILVEGLYLHSLIFMAFF). Over 317–319 (SEK) the chain is Cytoplasmic. Residues 320–340 (KYLWGFTVFGWGLPAVFVAVW) traverse the membrane as a helical segment. Residues 341–361 (VSVRATLANTGCWDLSSGNKK) are Extracellular-facing. Residues 362-382 (WIIQVPILASIVLHFILFINI) traverse the membrane as a helical segment. Residues 383–405 (VRVLATKLRETNAGRCDTRQQYR) are Cytoplasmic-facing. A helical transmembrane segment spans residues 406-426 (KLLKSTLVLMPLFGVHYIVFM). The Extracellular segment spans residues 427–440 (ATPYTEVSGTLWQV). The helical transmembrane segment at 441–461 (QMHYEMLFNSFQGFFVAIIYC) threads the bilayer. Residues 462–594 (FCNGEVQAEI…LLQEEWETVM (133 aa)) lie on the Cytoplasmic side of the membrane. Positions 475–478 (WSRW) match the Important for interaction with G proteins motif. The tract at residues 525 to 594 (PTATTNGHPQ…LLQEEWETVM (70 aa)) is disordered. The span at 543–558 (TPALETLETTPPATAA) shows a compositional bias: low complexity. Thr552 is modified (phosphothreonine).

Belongs to the G-protein coupled receptor 2 family. Homodimer in the absence of bound ligand. Peptide hormone binding leads to dissociation of the homodimer. In terms of processing, N-glycosylated.

The protein resides in the cell membrane. Functionally, G-protein-coupled receptor for parathyroid hormone (PTH) and for parathyroid hormone-related peptide (PTHLH). Ligand binding causes a conformation change that triggers signaling via guanine nucleotide-binding proteins (G proteins) and modulates the activity of downstream effectors, such as adenylate cyclase (cAMP). PTH1R is coupled to G(s) G alpha proteins and mediates activation of adenylate cyclase activity. PTHLH dissociates from PTH1R more rapidly than PTH; as consequence, the cAMP response induced by PTHLH decays faster than the response induced by PTH. This is Parathyroid hormone/parathyroid hormone-related peptide receptor (PTH1R) from Pongo abelii (Sumatran orangutan).